The following is a 309-amino-acid chain: Short-chain dehydrogenase/reductase ARMGADRAFT_1048226 (309 aa).

The NADP(+) site is built by Lys-64, Asp-86, Asn-113, and Lys-145. Residue Ser-167 is the Proton donor of the active site. The NADP(+) site is built by Tyr-196 and Lys-200. The Proton acceptor role is filled by Tyr-196. The Lowers pKa of active site Tyr role is filled by Lys-200.

The protein belongs to the short-chain dehydrogenases/reductases (SDR) family.

It participates in secondary metabolite biosynthesis. In terms of biological role, short-chain dehydrogenase/reductase, part of the gene cluster that mediates the biosynthesis of melleolides, a range of antifungal and phytotoxic polyketide derivatives composed of an orsellinic acid (OA) moiety esterified to various sesquiterpene alcohols. The first step in melleolides biosynthesis is performed by the delta(6)-protoilludene synthase PRO1 which catalyzes the cyclization of farnesyl diphosphate to protoilludene. The orsellinic acid synthase armB produces OA by condensing acetyl-CoA with 3 malonyl-CoA units in a three-round chain elongation reaction folowed by a C2-C7 ring closure. ArmB further catalyzes the trans-esterification of OA to the various sesquiterpene alcohols resulting from the hydroxylation of protoilludene. The melleolides cluster also includes 5 cytochrome P450 monooxygenases, 4 NAD(+)-dependent oxidoreductases, one flavin-dependent oxidoreductase, and one O-methyltransferase. The cytochrome P450 monooxygenases may be involved in protoilludene hydroxylation to elaborate melleolides with multiple alcohol groups, such as melleolide D, which carries alcohol functionalities at C-4, C-5, C-10, and C-13. The role of the NAD(+)-dependent enzymes remains unknown. Numerous melleolides, including arnamial, show 5'-O-methylation of the aromatic moiety which may be catalyzed by the methyltransferase encoded in the cluster. The flavin-dependent oxidoreductase might represent the dehydrogenase yielding the aldehyde in position 1 of arnamial and other melleolides. Finally, several halogenase localized outside of the cluster, are able to catalyze the transfer of a single chlorine atom to the melleolide backbone, resulting in a 6'-chloromelleolide product. This Armillaria gallica (Bulbous honey fungus) protein is Short-chain dehydrogenase/reductase ARMGADRAFT_1048226.